Here is a 516-residue protein sequence, read N- to C-terminus: ADP-ribosylation factor GTPase-activating protein 3 (516 aa).

One can recognise an Arf-GAP domain in the interval 10–126 (LTIFKRLRSV…IKSLASQATR (117 aa)). A C4-type zinc finger spans residues 25-48 (CFDCGAKNPSWASITYGVFLCIDC). Residues 170–199 (AEPSSLTSRPAETTLENNEGGQEQGPCVEG) form a disordered region. The segment covering 173–190 (SSLTSRPAETTLENNEGG) has biased composition (polar residues). Serine 231 bears the Phosphoserine mark. Residues 243–264 (NEIEKQAQAADKMKEQEDLAKA) are a coiled coil. 4 positions are modified to phosphoserine: serine 270, serine 274, serine 331, and serine 370. The disordered stretch occupies residues 393 to 417 (TTGYSDRPTARHKPDYEPVENTDEA). Phosphoserine occurs at positions 428, 451, 453, 455, 457, and 458.

It localises to the cytoplasm. The protein resides in the golgi apparatus membrane. Its activity is regulated as follows. GAP activity stimulated by phosphatidylinositol 4,5-bisphosphate (PIP2). Functionally, GTPase-activating protein (GAP) for ADP ribosylation factor 1 (ARF1). Hydrolysis of ARF1-bound GTP may lead to dissociation of coatomer from Golgi-derived membranes to allow fusion with target membranes. The polypeptide is ADP-ribosylation factor GTPase-activating protein 3 (Pongo abelii (Sumatran orangutan)).